A 156-amino-acid polypeptide reads, in one-letter code: Ribosomal RNA large subunit methyltransferase H (156 aa).

S-adenosyl-L-methionine is bound by residues Leu-73, Gly-104, and 123-128; that span reads ISSLTL.

It belongs to the RNA methyltransferase RlmH family. In terms of assembly, homodimer.

It is found in the cytoplasm. It catalyses the reaction pseudouridine(1915) in 23S rRNA + S-adenosyl-L-methionine = N(3)-methylpseudouridine(1915) in 23S rRNA + S-adenosyl-L-homocysteine + H(+). In terms of biological role, specifically methylates the pseudouridine at position 1915 (m3Psi1915) in 23S rRNA. In Herminiimonas arsenicoxydans, this protein is Ribosomal RNA large subunit methyltransferase H.